The following is a 269-amino-acid chain: uncharacterized protein (269 aa).

Helical transmembrane passes span 64–84 (FVYFLFFLCFFLNNVLFLAGV), 125–145 (YGIANLVFGLISLALLVFLSF), 169–189 (FFISIVVYLLWILLMVLFLVL), and 230–250 (VFATAWAISLVFYSFFFIAIF).

It localises to the cell membrane. This is an uncharacterized protein from Mycoplasma genitalium (strain ATCC 33530 / DSM 19775 / NCTC 10195 / G37) (Mycoplasmoides genitalium).